We begin with the raw amino-acid sequence, 176 residues long: Large ribosomal subunit protein uL16 (176 aa).

The protein belongs to the universal ribosomal protein uL16 family.

The sequence is that of Large ribosomal subunit protein uL16 from Halobacterium salinarum (strain ATCC 29341 / DSM 671 / R1).